Reading from the N-terminus, the 193-residue chain is Potassium-transporting ATPase KdpC subunit (193 aa).

A helical membrane pass occupies residues 7–27 (PLVVLFVVLNAVTGLAYPAVM).

Belongs to the KdpC family. As to quaternary structure, the system is composed of three essential subunits: KdpA, KdpB and KdpC.

The protein resides in the cell inner membrane. Functionally, part of the high-affinity ATP-driven potassium transport (or Kdp) system, which catalyzes the hydrolysis of ATP coupled with the electrogenic transport of potassium into the cytoplasm. This subunit acts as a catalytic chaperone that increases the ATP-binding affinity of the ATP-hydrolyzing subunit KdpB by the formation of a transient KdpB/KdpC/ATP ternary complex. The polypeptide is Potassium-transporting ATPase KdpC subunit (Burkholderia cenocepacia (strain HI2424)).